The chain runs to 463 residues: UDP-N-acetylmuramate--L-alanine ligase (463 aa).

112-118 provides a ligand contact to ATP; that stretch reads GTHGKTT.

Belongs to the MurCDEF family.

It localises to the cytoplasm. The catalysed reaction is UDP-N-acetyl-alpha-D-muramate + L-alanine + ATP = UDP-N-acetyl-alpha-D-muramoyl-L-alanine + ADP + phosphate + H(+). It functions in the pathway cell wall biogenesis; peptidoglycan biosynthesis. In terms of biological role, cell wall formation. The sequence is that of UDP-N-acetylmuramate--L-alanine ligase from Thiobacillus denitrificans (strain ATCC 25259 / T1).